Consider the following 143-residue polypeptide: Nucleoside diphosphate kinase (143 aa).

ATP contacts are provided by Lys-11, Phe-59, Arg-87, Thr-93, Arg-104, and Asn-114. His-117 serves as the catalytic Pros-phosphohistidine intermediate.

Belongs to the NDK family. As to quaternary structure, homotetramer. Requires Mg(2+) as cofactor.

It localises to the cytoplasm. It carries out the reaction a 2'-deoxyribonucleoside 5'-diphosphate + ATP = a 2'-deoxyribonucleoside 5'-triphosphate + ADP. It catalyses the reaction a ribonucleoside 5'-diphosphate + ATP = a ribonucleoside 5'-triphosphate + ADP. Functionally, major role in the synthesis of nucleoside triphosphates other than ATP. The ATP gamma phosphate is transferred to the NDP beta phosphate via a ping-pong mechanism, using a phosphorylated active-site intermediate. This Cronobacter sakazakii (strain ATCC BAA-894) (Enterobacter sakazakii) protein is Nucleoside diphosphate kinase.